Consider the following 274-residue polypeptide: Thiamine kinase (274 aa).

The protein belongs to the thiamine kinase family.

It catalyses the reaction thiamine + ATP = thiamine phosphate + ADP + H(+). It participates in cofactor biosynthesis; thiamine diphosphate biosynthesis; thiamine phosphate from thiamine: step 1/1. Catalyzes the ATP-dependent phosphorylation of thiamine to thiamine phosphate. Is involved in thiamine salvage. The protein is Thiamine kinase of Escherichia coli O9:H4 (strain HS).